A 335-amino-acid polypeptide reads, in one-letter code: Glutamyl-tRNA reductase (335 aa).

Residues 60–63 (TCHR), Ser110, 115–117 (ETE), and Gln121 each bind substrate. The active-site Nucleophile is Cys61. Position 189–194 (189–194 (GYSEIN)) interacts with NADP(+).

It belongs to the glutamyl-tRNA reductase family. In terms of assembly, homodimer.

It catalyses the reaction (S)-4-amino-5-oxopentanoate + tRNA(Glu) + NADP(+) = L-glutamyl-tRNA(Glu) + NADPH + H(+). It functions in the pathway porphyrin-containing compound metabolism; protoporphyrin-IX biosynthesis; 5-aminolevulinate from L-glutamyl-tRNA(Glu): step 1/2. Its function is as follows. Catalyzes the NADPH-dependent reduction of glutamyl-tRNA(Glu) to glutamate 1-semialdehyde (GSA). The chain is Glutamyl-tRNA reductase from Chlamydia trachomatis serovar D (strain ATCC VR-885 / DSM 19411 / UW-3/Cx).